The following is a 551-amino-acid chain: Delta-selinene synthase TPS7FN (551 aa).

Residues Arg-266, Asp-303, Asp-307, Arg-444, and Asp-447 each coordinate (2E,6E)-farnesyl diphosphate. Residues Asp-303 and Asp-307 each contribute to the Mg(2+) site. Positions 303–307 match the DDXXD motif motif; sequence DDIYD. Mg(2+) contacts are provided by Asp-447, Ser-451, and Glu-455.

It belongs to the terpene synthase family. Tpsb subfamily. The cofactor is Mg(2+). Requires Mn(2+) as cofactor.

The catalysed reaction is (2E,6E)-farnesyl diphosphate = delta-selinene + diphosphate. The enzyme catalyses (2E)-geranyl diphosphate = beta-myrcene + diphosphate. It catalyses the reaction (2E)-geranyl diphosphate = (4S)-limonene + diphosphate. It carries out the reaction (2E,6E)-farnesyl diphosphate + H2O = selina-6-en-4-ol + diphosphate. Its pathway is secondary metabolite biosynthesis; terpenoid biosynthesis. Its function is as follows. Involved in sesquiterpene olefins biosynthesis, constituants of cannabinoids and terpenoids-rich resins. Catalyzes mainly the conversion of (2E)-farnesyl diphosphate to delta-selinene, and also produces minor products such as selina-6-en-4-ol. Can also use (2E)-geranyl diphosphate as substrate with low efficiency, producing minor amounts of myrcene and limonene. This chain is Delta-selinene synthase TPS7FN, found in Cannabis sativa (Hemp).